Here is a 352-residue protein sequence, read N- to C-terminus: tRNA pseudouridine synthase D (352 aa).

The active-site Nucleophile is Asp-81. Residues 157-303 form the TRUD domain; the sequence is GVPNYFGTQR…MDHERRILRL (147 aa).

The protein belongs to the pseudouridine synthase TruD family.

The catalysed reaction is uridine(13) in tRNA = pseudouridine(13) in tRNA. Functionally, responsible for synthesis of pseudouridine from uracil-13 in transfer RNAs. In Pseudomonas putida (strain ATCC 47054 / DSM 6125 / CFBP 8728 / NCIMB 11950 / KT2440), this protein is tRNA pseudouridine synthase D.